We begin with the raw amino-acid sequence, 518 residues long: Sensor protein kinase HptS (518 aa).

A run of 2 helical transmembrane segments spans residues isoleucine 20–tryptophan 40 and glycine 222–isoleucine 242. The Histidine kinase domain maps to glutamate 297 to arginine 513. Position 325 is a phosphohistidine; by autocatalysis (histidine 325).

Post-translationally, autophosphorylated.

The protein resides in the cell membrane. The enzyme catalyses ATP + protein L-histidine = ADP + protein N-phospho-L-histidine.. Functionally, member of the two-component regulatory system HptS/HptR that regulates genes involved in hexose phosphate transport system in response to changes in extracellular phosphate sources. May act as a sensor protein kinase which is autophosphorylated at a histidine residue and transfers its phosphate group to the conserved aspartic acid residue in the regulatory domain of HptS. In turn, HptS antagonizes CcpA-dependent transcription of a subset of CcpA-regulated genes involved in antibiotic susceptibility. In Staphylococcus aureus (strain bovine RF122 / ET3-1), this protein is Sensor protein kinase HptS (hptS).